The primary structure comprises 80 residues: Clavanin-A (80 aa).

The signal sequence occupies residues M1–S19. Positions L20–K29 are excised as a propeptide. Phenylalanine amide is present on F52. A propeptide spanning residues D54–Q80 is cleaved from the precursor.

It is found in the secreted. Functionally, has antimicrobial activity. In Styela clava (Sea squirt), this protein is Clavanin-A.